We begin with the raw amino-acid sequence, 83 residues long: Acyl carrier protein MmaB (83 aa).

Residues 3-83 (DPVRQRILLA…LSQSELESPT (81 aa)) form the Carrier domain. S39 is subject to O-(pantetheine 4'-phosphoryl)serine.

This sequence belongs to the acyl carrier protein (ACP) family. Pantetheine 4'-phosphate serves as cofactor.

The protein operates within lipid metabolism; fatty acid metabolism. Its function is as follows. Acyl-carrier protein (ACP) involved in the biosynthesis of a unique class of isonitrile lipopeptides (INLPs) that seem to play a role in metal acquisition in M.marinum. Is the dedicated ACP for the loading of activated acyl groups catalyzed by MmaC. The chain is Acyl carrier protein MmaB from Mycobacterium marinum (strain ATCC BAA-535 / M).